The following is a 947-amino-acid chain: ATP-dependent RNA helicase DDX42 (947 aa).

Residues 1–18 are compositionally biased toward gly residues; that stretch reads MNWNKGGSGNKRGFGFGG. Disordered stretches follow at residues 1–54, 68–114, and 176–200; these read MNWN…NQLP, EENS…PLEA, and NLEY…LPPI. The segment covering 34 to 54 has biased composition (polar residues); sequence VSHSAFQSASSKYGSTSNQLP. Residues 68–81 show a composition bias toward acidic residues; sequence EENSYFDDEEEDSS. Positions 112–152 form a coiled coil; it reads LEAFMAEVEDQAAKDMRKLEERDKEKANARGIRDDIEEEDD. The Q motif signature appears at 250–278; it reads SSFAHFGFDEQLLHQIRKSEYTQPTPIQC. The Helicase ATP-binding domain maps to 281–456; sequence IPVALSGRDM…RDILVDPIRV (176 aa). 294-301 lines the ATP pocket; the sequence is AKTGSGKT. A DEAD box motif is present at residues 404–407; it reads DEAD. Residues 484 to 629 form the Helicase C-terminal domain; sequence WLTRRLVEFT…YVSKELLDLA (146 aa). Disordered regions lie at residues 731-754 and 797-947; these read SAGS…EAAP and GASA…RWDS. Positions 805-929 are enriched in basic and acidic residues; sequence GGRERHSDSK…RKEGTREAKT (125 aa). The span at 938 to 947 shows a compositional bias: basic residues; it reads PKRKKSRWDS.

The protein belongs to the DEAD box helicase family. DDX42 subfamily. Transient component of the SF3B subcomplex of the 17S U2 SnRNP complex.

It localises to the cytoplasm. The protein resides in the nucleus. The enzyme catalyses ATP + H2O = ADP + phosphate + H(+). ATP-dependent RNA helicase that binds to partially double-stranded RNAs (dsRNAs) in order to unwind RNA secondary structures. Unwinding is promoted in the presence of single-strand binding proteins. Also mediates RNA duplex formation thereby displacing the single-strand RNA binding protein. ATP and ADP modulate its activity: ATP binding and hydrolysis by DDX42 triggers RNA strand separation, whereas the ADP-bound form of the protein triggers annealing of complementary RNA strands. Required for assembly of the 17S U2 SnRNP complex of the spliceosome, a large ribonucleoprotein complex that removes introns from transcribed pre-mRNAs: DDX42 associates transiently with the SF3B subcomplex of the 17S U2 SnRNP complex and is released after fulfilling its role in the assembly of 17S U2 SnRNP. The sequence is that of ATP-dependent RNA helicase DDX42 (ddx42) from Xenopus laevis (African clawed frog).